We begin with the raw amino-acid sequence, 188 residues long: dCTP deaminase (188 aa).

DCTP contacts are provided by residues 111 to 116 (KSTYAR), 135 to 137 (VLE), glutamine 156, tyrosine 170, and glutamine 180. Residue glutamate 137 is the Proton donor/acceptor of the active site.

Belongs to the dCTP deaminase family. In terms of assembly, homotrimer.

It catalyses the reaction dCTP + H2O + H(+) = dUTP + NH4(+). The protein operates within pyrimidine metabolism; dUMP biosynthesis; dUMP from dCTP (dUTP route): step 1/2. Catalyzes the deamination of dCTP to dUTP. This Protochlamydia amoebophila (strain UWE25) protein is dCTP deaminase.